The sequence spans 311 residues: Protoheme IX farnesyltransferase (311 aa).

The next 9 membrane-spanning stretches (helical) occupy residues 38–58, 62–82, 113–133, 134–154, 162–182, 188–208, 230–250, 251–271, and 286–306; these read IKVVALLVLTALVGLALAPDM, YFVQLLSLFGIGLLSSSAAVI, LIFSAVIGTLGFSLLVFAANW, LTAQMTLFALVGYAFVYTMFL, IVIGGLAGAMPPLLGWISETG, PWILVMIIFTWTPPHFWALAI, FTKTCILLYSLLLTVVCFLPF, LIHMSGYLYLFVAMLINIIFI, and ALNLFKYSILHLTLLFIALFA.

The protein belongs to the UbiA prenyltransferase family. Protoheme IX farnesyltransferase subfamily.

Its subcellular location is the cell inner membrane. The catalysed reaction is heme b + (2E,6E)-farnesyl diphosphate + H2O = Fe(II)-heme o + diphosphate. Its pathway is porphyrin-containing compound metabolism; heme O biosynthesis; heme O from protoheme: step 1/1. Functionally, converts heme B (protoheme IX) to heme O by substitution of the vinyl group on carbon 2 of heme B porphyrin ring with a hydroxyethyl farnesyl side group. The sequence is that of Protoheme IX farnesyltransferase from Psychromonas ingrahamii (strain DSM 17664 / CCUG 51855 / 37).